The sequence spans 88 residues: uncharacterized protein (88 aa).

2 helical membrane-spanning segments follow: residues 8–28 (IFLSFFSPIYLSLLLNGSIFF) and 45–65 (ELLRCQICLCSLFWMVTVINL).

It is found in the membrane. This is an uncharacterized protein from Saccharomyces cerevisiae (strain ATCC 204508 / S288c) (Baker's yeast).